Reading from the N-terminus, the 238-residue chain is Leucyl/phenylalanyl-tRNA--protein transferase (238 aa).

The protein belongs to the L/F-transferase family.

The protein localises to the cytoplasm. The enzyme catalyses N-terminal L-lysyl-[protein] + L-leucyl-tRNA(Leu) = N-terminal L-leucyl-L-lysyl-[protein] + tRNA(Leu) + H(+). The catalysed reaction is N-terminal L-arginyl-[protein] + L-leucyl-tRNA(Leu) = N-terminal L-leucyl-L-arginyl-[protein] + tRNA(Leu) + H(+). It carries out the reaction L-phenylalanyl-tRNA(Phe) + an N-terminal L-alpha-aminoacyl-[protein] = an N-terminal L-phenylalanyl-L-alpha-aminoacyl-[protein] + tRNA(Phe). Its function is as follows. Functions in the N-end rule pathway of protein degradation where it conjugates Leu, Phe and, less efficiently, Met from aminoacyl-tRNAs to the N-termini of proteins containing an N-terminal arginine or lysine. In Pseudoalteromonas translucida (strain TAC 125), this protein is Leucyl/phenylalanyl-tRNA--protein transferase.